The chain runs to 335 residues: Nuclear transcription factor Y subunit gamma (335 aa).

It belongs to the NFYC/HAP5 subunit family. Heterotrimeric transcription factor composed of three components, NF-YA, NF-YB and NF-YC. NF-YB and NF-YC must interact and dimerize for NF-YA association and DNA binding.

It is found in the nucleus. Its function is as follows. Component of the sequence-specific heterotrimeric transcription factor (NF-Y) which specifically recognizes a 5'-CCAAT-3' box motif found in the promoters of its target genes. NF-Y can function as both an activator and a repressor, depending on its interacting cofactors. The sequence is that of Nuclear transcription factor Y subunit gamma (Nfyc) from Rattus norvegicus (Rat).